Reading from the N-terminus, the 96-residue chain is Essential MCU regulator, mitochondrial (96 aa).

Residues 1–34 constitute a mitochondrion transit peptide; that stretch reads MIVSRLTFPLQAAKLVARKAAGNPSNSIIQRRHM. Residues 52-72 traverse the membrane as a helical segment; sequence PFGLFAIFCAVIPGLFIGATI.

This sequence belongs to the SMDT1/EMRE family.

The protein resides in the mitochondrion inner membrane. Functionally, essential regulatory subunit of the mitochondrial calcium uniporter (mcu) channel, a protein that mediates calcium uptake into mitochondria. The chain is Essential MCU regulator, mitochondrial from Drosophila pseudoobscura pseudoobscura (Fruit fly).